Consider the following 1097-residue polypeptide: DNA-directed RNA polymerase subunit beta (1097 aa).

The tract at residues 1073–1097 (DINPRRNTPSRPTYESLGTSEYEED) is disordered. The segment covering 1077 to 1091 (RRNTPSRPTYESLGT) has biased composition (polar residues).

It belongs to the RNA polymerase beta chain family. As to quaternary structure, in cyanobacteria the RNAP catalytic core is composed of 2 alpha, 1 beta, 1 beta', 1 gamma and 1 omega subunit. When a sigma factor is associated with the core the holoenzyme is formed, which can initiate transcription.

It catalyses the reaction RNA(n) + a ribonucleoside 5'-triphosphate = RNA(n+1) + diphosphate. DNA-dependent RNA polymerase catalyzes the transcription of DNA into RNA using the four ribonucleoside triphosphates as substrates. The polypeptide is DNA-directed RNA polymerase subunit beta (Prochlorococcus marinus (strain MIT 9312)).